The primary structure comprises 469 residues: Interstitial collagenase (469 aa).

The N-terminal stretch at Met-1–Phe-19 is a signal peptide. The propeptide at Pro-20–Glu-99 is activation peptide. Ser-57 is modified (phosphoserine). A Cysteine switch motif is present at residues Pro-90–Val-97. Cys-92 serves as a coordination point for Zn(2+). Asn-120 is a glycosylation site (N-linked (GlcNAc...) asparagine). 2 residues coordinate Ca(2+): Asp-124 and Asp-158. Residues His-168 and Asp-170 each coordinate Zn(2+). Residues Asp-175, Gly-176, Gly-178, and Asn-180 each coordinate Ca(2+). Residue His-183 participates in Zn(2+) binding. Ca(2+)-binding residues include Gly-190, Gly-192, and Asp-194. Zn(2+) is bound at residue His-196. Ca(2+) contacts are provided by Asp-198, Glu-199, and Glu-201. His-218 serves as a coordination point for Zn(2+). Glu-219 is a catalytic residue. Residues His-222 and His-228 each coordinate Zn(2+). The residue at position 274 (Thr-274) is a Phosphothreonine. Hemopexin repeat units follow at residues Pro-275 to Val-324, Pro-325 to Pro-371, Val-374 to Ile-422, and Gly-423 to Cys-466. A disulfide bridge connects residues Cys-278 and Cys-466. Residues Asp-285 and Gln-329 each coordinate Ca(2+). Tyr-360 is modified (phosphotyrosine; by PKDCC). The Ca(2+) site is built by Asp-378 and Asp-427.

The protein belongs to the peptidase M10A family. It depends on Ca(2+) as a cofactor. Requires Zn(2+) as cofactor. In terms of processing, undergoes autolytic cleavage to produce a N-terminal fragment having reduced collagenolytic activity. Tyrosine phosphorylated in platelets by PKDCC/VLK.

The protein resides in the secreted. Its subcellular location is the extracellular space. The protein localises to the extracellular matrix. The enzyme catalyses Cleavage of the triple helix of collagen at about three-quarters of the length of the molecule from the N-terminus, at 775-Gly-|-Ile-776 in the alpha1(I) chain. Cleaves synthetic substrates and alpha-macroglobulins at bonds where P1' is a hydrophobic residue.. Can be activated without removal of the activation peptide. In terms of biological role, cleaves collagens of types I, II, and III at one site in the helical domain. Also cleaves collagens of types VII and X. This chain is Interstitial collagenase (MMP1), found in Sus scrofa (Pig).